The sequence spans 227 residues: SPbeta prophage-derived uncharacterized membrane protein YomJ (227 aa).

2 helical membrane-spanning segments follow: residues 16–36 (LFFLLMDGWRGMGICLIIVGL) and 131–151 (GIVAGGLLAGGIGAAIGGLSA).

Its subcellular location is the cell membrane. The chain is SPbeta prophage-derived uncharacterized membrane protein YomJ (yomJ) from Bacillus subtilis (strain 168).